We begin with the raw amino-acid sequence, 356 residues long: Heat-inducible transcription repressor HrcA (356 aa).

It belongs to the HrcA family.

Functionally, negative regulator of class I heat shock genes (grpE-dnaK-dnaJ and groELS operons). Prevents heat-shock induction of these operons. This is Heat-inducible transcription repressor HrcA from Gluconobacter oxydans (strain 621H) (Gluconobacter suboxydans).